Here is a 670-residue protein sequence, read N- to C-terminus: UvrABC system protein B (670 aa).

Positions 26–183 (EGLEDGLAHQ…RRLAELQYAR (158 aa)) constitute a Helicase ATP-binding domain. ATP is bound at residue 39 to 46 (GVTGSGKT). The Beta-hairpin signature appears at 92–115 (YYDYYQPEAYVPSSDTFIEKDAAV). Residues 431–597 (QVDDLLSEIR…GLNKKVSDVL (167 aa)) form the Helicase C-terminal domain. The region spanning 630 to 665 (DQKIRELEAQMYTHAQNLEFELAAGLRDEIHQLREQ) is the UVR domain.

The protein belongs to the UvrB family. Forms a heterotetramer with UvrA during the search for lesions. Interacts with UvrC in an incision complex.

Its subcellular location is the cytoplasm. Its function is as follows. The UvrABC repair system catalyzes the recognition and processing of DNA lesions. A damage recognition complex composed of 2 UvrA and 2 UvrB subunits scans DNA for abnormalities. Upon binding of the UvrA(2)B(2) complex to a putative damaged site, the DNA wraps around one UvrB monomer. DNA wrap is dependent on ATP binding by UvrB and probably causes local melting of the DNA helix, facilitating insertion of UvrB beta-hairpin between the DNA strands. Then UvrB probes one DNA strand for the presence of a lesion. If a lesion is found the UvrA subunits dissociate and the UvrB-DNA preincision complex is formed. This complex is subsequently bound by UvrC and the second UvrB is released. If no lesion is found, the DNA wraps around the other UvrB subunit that will check the other stand for damage. The protein is UvrABC system protein B of Serratia proteamaculans (strain 568).